The chain runs to 612 residues: PAN2-PAN3 deadenylation complex subunit PAN3 (612 aa).

The C3H1-type zinc finger occupies 10–39; that stretch reads WAKDTPCKNITIYGYCKYENDGCIFNHGKP. The span at 44–62 shows a compositional bias: low complexity; that stretch reads SNTGGAAAGSAEDSAASGG. Residues 44 to 64 form a disordered region; the sequence is SNTGGAAAGSAEDSAASGGVT. Short sequence motifs (PABPC-interacting motif-2 (PAM-2)) lie at residues 84–104 and 111–131; these read SVAIPDFNNIPSFTPERIVSS and TAFTPSFNPYGSDSFNPSANV. The tract at residues 231 to 481 is pseudokinase domain; sequence QVFPSDGNLP…TIAEFTALFS (251 aa). Residues arginine 286, 336–343, and 389–390 contribute to the ATP site; these read DYYPQSNS and DK. Residues 482–520 are a coiled coil; it reads HKMLDIISSSQTYSEYIEQHLSRELENGRLFRLMCKLNF. The segment at 521–612 is knob domain; the sequence is IFGRMESSMD…IDSTFRSMTQ (92 aa).

It belongs to the protein kinase superfamily. PAN3 family. As to quaternary structure, homodimer. Forms a heterotrimer with a catalytic subunit PAN2 to form the poly(A)-nuclease (PAN) deadenylation complex. Interacts (via PAM-2 motif) with poly(A)-binding protein PAB1 (via PABC domain), conferring substrate specificity of the enzyme complex.

Its subcellular location is the cytoplasm. In terms of biological role, regulatory subunit of the poly(A)-nuclease (PAN) deadenylation complex, one of two cytoplasmic mRNA deadenylases involved in mRNA turnover. PAN specifically shortens poly(A) tails of RNA and the activity is stimulated by poly(A)-binding protein PAB1. PAN deadenylation is followed by rapid degradation of the shortened mRNA tails by the CCR4-NOT complex. Deadenylated mRNAs are then degraded by two alternative mechanisms, namely exosome-mediated 3'-5' exonucleolytic degradation, or deadenylation-dependent mRNA decaping and subsequent 5'-3' exonucleolytic degradation by XRN1. May also be involved in post-transcriptional maturation of mRNA poly(A) tails. PAN3 acts as a positive regulator for PAN activity, recruiting the catalytic subunit PAN2 to mRNA via its interaction with RNA and with PAB1. The protein is PAN2-PAN3 deadenylation complex subunit PAN3 of Eremothecium gossypii (strain ATCC 10895 / CBS 109.51 / FGSC 9923 / NRRL Y-1056) (Yeast).